The sequence spans 160 residues: Cytochrome b6-f complex subunit 4 (160 aa).

The next 3 helical transmembrane spans lie at Leu-36 to Val-56, Leu-95 to Glu-115, and Ala-131 to Ile-151.

Belongs to the cytochrome b family. PetD subfamily. As to quaternary structure, the 4 large subunits of the cytochrome b6-f complex are cytochrome b6, subunit IV (17 kDa polypeptide, PetD), cytochrome f and the Rieske protein, while the 4 small subunits are PetG, PetL, PetM and PetN. The complex functions as a dimer.

It localises to the cellular thylakoid membrane. In terms of biological role, component of the cytochrome b6-f complex, which mediates electron transfer between photosystem II (PSII) and photosystem I (PSI), cyclic electron flow around PSI, and state transitions. In Prochlorococcus marinus (strain SARG / CCMP1375 / SS120), this protein is Cytochrome b6-f complex subunit 4.